Consider the following 260-residue polypeptide: Putative enoyl-CoA hydratase/isomerase YngF (260 aa).

The protein belongs to the enoyl-CoA hydratase/isomerase family.

The polypeptide is Putative enoyl-CoA hydratase/isomerase YngF (yngF) (Bacillus subtilis (strain 168)).